The primary structure comprises 261 residues: Hemin import ATP-binding protein HmuV (261 aa).

In terms of domain architecture, ABC transporter spans 2–243 (LCANNVSAQI…ALLKRVYNIN (242 aa)). Residue 34-41 (GPNGAGKS) coordinates ATP.

The protein belongs to the ABC transporter superfamily. Heme (hemin) importer (TC 3.A.1.14.5) family. In terms of assembly, the complex is composed of two ATP-binding proteins (HmuV), two transmembrane proteins (HmuU) and a solute-binding protein (HmuT).

It is found in the cell inner membrane. Part of the ABC transporter complex HmuTUV involved in hemin import. Responsible for energy coupling to the transport system. The sequence is that of Hemin import ATP-binding protein HmuV from Pseudoalteromonas translucida (strain TAC 125).